The primary structure comprises 128 residues: Phosphoribosyl-AMP cyclohydrolase (128 aa).

Residue Asp-89 coordinates Mg(2+). Cys-90 lines the Zn(2+) pocket. Residues Asp-91 and Asp-93 each coordinate Mg(2+). Zn(2+) contacts are provided by Cys-106 and Cys-113.

Belongs to the PRA-CH family. In terms of assembly, homodimer. The cofactor is Mg(2+). Requires Zn(2+) as cofactor.

It localises to the cytoplasm. The enzyme catalyses 1-(5-phospho-beta-D-ribosyl)-5'-AMP + H2O = 1-(5-phospho-beta-D-ribosyl)-5-[(5-phospho-beta-D-ribosylamino)methylideneamino]imidazole-4-carboxamide. Its pathway is amino-acid biosynthesis; L-histidine biosynthesis; L-histidine from 5-phospho-alpha-D-ribose 1-diphosphate: step 3/9. In terms of biological role, catalyzes the hydrolysis of the adenine ring of phosphoribosyl-AMP. The sequence is that of Phosphoribosyl-AMP cyclohydrolase from Pyrobaculum calidifontis (strain DSM 21063 / JCM 11548 / VA1).